We begin with the raw amino-acid sequence, 404 residues long: uncharacterized protein (404 aa).

The next 12 membrane-spanning stretches (helical) occupy residues 3–23 (IIAK…PITE), 43–63 (TTQI…LTLG), 73–93 (PVVL…IFAP), 95–115 (IETL…GSVI), 135–155 (SLSP…GYII), 162–182 (YTFV…CKIL), 216–236 (IIGA…FIFI), 248–268 (KLAF…GYLI), 280–300 (ILGL…ALIL), 309–329 (IAVI…NLLI), 346–366 (TAGS…TFLV), and 377–397 (FALL…YILI).

It belongs to the major facilitator superfamily. Bcr/CmlA family.

The protein resides in the cell inner membrane. This is an uncharacterized protein from Rickettsia bellii (strain RML369-C).